The primary structure comprises 255 residues: U2 small nuclear ribonucleoprotein A' (255 aa).

LRR repeat units lie at residues 20–41 (RDRE…GATL), 43–64 (QFDA…PLLR), 65–86 (RLKT…LDQA), and 89–110 (CLTE…DPLA). In terms of domain architecture, LRRCT spans 123–161 (NPVTNKKHYRLYVIYKVPQVRVLDFQKVKLKERQEAEKM). At K172 the chain carries N6-acetyllysine; alternate. K172 participates in a covalent cross-link: Glycyl lysine isopeptide (Lys-Gly) (interchain with G-Cter in SUMO2); alternate. Residues S178 and S197 each carry the phosphoserine modification. The tract at residues 179–199 (KTFNPGAGLPTDKKKGGPSAG) is disordered. K221 participates in a covalent cross-link: Glycyl lysine isopeptide (Lys-Gly) (interchain with G-Cter in SUMO2). Residues 222-255 (GLLQSGQIPGRERRSGPSDEGEEEIEDDTVTNGS) form a disordered region. Phosphoserine is present on residues S236 and S255. Acidic residues predominate over residues 240-255 (DEGEEEIEDDTVTNGS).

The protein belongs to the U2 small nuclear ribonucleoprotein A family. In terms of assembly, identified in the spliceosome B complex. Identified in the spliceosome C complex. Found in a pre-mRNA splicing complex with SFRS4, SFRS5, SNRNP70, SNRPA1, SRRM1 and SRRM2. Found in a pre-mRNA exonic splicing enhancer (ESE) complex with SNRNP70, SNRPA1, SRRM1 and TRA2B. Contributes to the binding of stem loop IV of U2 snRNA with SNRPB2.

It is found in the nucleus. In terms of biological role, involved in pre-mRNA splicing as component of the spliceosome. Associated with sn-RNP U2, where it contributes to the binding of stem loop IV of U2 snRNA. This Mus musculus (Mouse) protein is U2 small nuclear ribonucleoprotein A' (Snrpa1).